The primary structure comprises 378 residues: Quinolinate synthase (378 aa).

The iminosuccinate site is built by histidine 59 and serine 80. Cysteine 125 is a binding site for [4Fe-4S] cluster. Iminosuccinate-binding positions include tyrosine 151 to asparagine 153 and serine 168. Position 212 (cysteine 212) interacts with [4Fe-4S] cluster. Iminosuccinate is bound by residues histidine 238–glutamate 240 and threonine 255. A [4Fe-4S] cluster-binding site is contributed by cysteine 309.

It belongs to the quinolinate synthase family. Type 1 subfamily. It depends on [4Fe-4S] cluster as a cofactor.

The protein resides in the cytoplasm. The enzyme catalyses iminosuccinate + dihydroxyacetone phosphate = quinolinate + phosphate + 2 H2O + H(+). It participates in cofactor biosynthesis; NAD(+) biosynthesis; quinolinate from iminoaspartate: step 1/1. In terms of biological role, catalyzes the condensation of iminoaspartate with dihydroxyacetone phosphate to form quinolinate. This chain is Quinolinate synthase, found in Burkholderia mallei (strain NCTC 10247).